We begin with the raw amino-acid sequence, 358 residues long: D-alanine--D-alanine ligase B (358 aa).

Residues 147–352 (KYVLENFKFK…YSALIDELIE (206 aa)) enclose the ATP-grasp domain. An ATP-binding site is contributed by 179 to 234 (VEKLQYDVFIKPANSGSSVGITKAHNKEELLKGLEEAFIHDKNVLVEEAINAREIE). Positions 305, 319, and 321 each coordinate Mg(2+).

It belongs to the D-alanine--D-alanine ligase family. It depends on Mg(2+) as a cofactor. Mn(2+) serves as cofactor.

It is found in the cytoplasm. The enzyme catalyses 2 D-alanine + ATP = D-alanyl-D-alanine + ADP + phosphate + H(+). It functions in the pathway cell wall biogenesis; peptidoglycan biosynthesis. Functionally, cell wall formation. In Clostridium tetani (strain Massachusetts / E88), this protein is D-alanine--D-alanine ligase B.